The chain runs to 700 residues: Methionine--tRNA ligase (700 aa).

Positions Pro-14–His-24 match the 'HIGH' region motif. Cys-146, Cys-149, Cys-159, and Cys-162 together coordinate Zn(2+). The short motif at Lys-344 to Ser-348 is the 'KMSKS' region element. Lys-347 lines the ATP pocket. The region spanning Asp-599–Gln-700 is the tRNA-binding domain.

Belongs to the class-I aminoacyl-tRNA synthetase family. MetG type 1 subfamily. As to quaternary structure, homodimer. The cofactor is Zn(2+).

The protein resides in the cytoplasm. It catalyses the reaction tRNA(Met) + L-methionine + ATP = L-methionyl-tRNA(Met) + AMP + diphosphate. Its function is as follows. Is required not only for elongation of protein synthesis but also for the initiation of all mRNA translation through initiator tRNA(fMet) aminoacylation. This Pelodictyon phaeoclathratiforme (strain DSM 5477 / BU-1) protein is Methionine--tRNA ligase.